The primary structure comprises 216 residues: Redox-sensing transcriptional repressor Rex (216 aa).

Residues 15-54 (KYLRVTQQLIEEGRDAVSSKELGDFTGINPVQVRRDLNAI) constitute a DNA-binding region (H-T-H motif). Residue 89–94 (GAGNLG) coordinates NAD(+).

It belongs to the transcriptional regulatory Rex family. As to quaternary structure, homodimer.

The protein resides in the cytoplasm. In terms of biological role, modulates transcription in response to changes in cellular NADH/NAD(+) redox state. The polypeptide is Redox-sensing transcriptional repressor Rex (Rubrobacter xylanophilus (strain DSM 9941 / JCM 11954 / NBRC 16129 / PRD-1)).